Here is a 64-residue protein sequence, read N- to C-terminus: Metallothionein-A (64 aa).

This sequence belongs to the metallothionein superfamily. Type 4 family.

In terms of biological role, metallothioneins have a high content of cysteine residues that bind various heavy metals. This Strongylocentrotus purpuratus (Purple sea urchin) protein is Metallothionein-A (MTA).